We begin with the raw amino-acid sequence, 201 residues long: dCTP deaminase, dUMP-forming (201 aa).

DCTP contacts are provided by residues 117 to 122, Asp-135, 143 to 145, Gln-163, Tyr-177, and Gln-188; these read RSSFGR and TLE. Glu-145 (proton donor/acceptor) is an active-site residue.

This sequence belongs to the dCTP deaminase family. Homotrimer.

It carries out the reaction dCTP + 2 H2O = dUMP + NH4(+) + diphosphate. It functions in the pathway pyrimidine metabolism; dUMP biosynthesis; dUMP from dCTP: step 1/1. Functionally, bifunctional enzyme that catalyzes both the deamination of dCTP to dUTP and the hydrolysis of dUTP to dUMP without releasing the toxic dUTP intermediate. The protein is dCTP deaminase, dUMP-forming of Methanococcus aeolicus (strain ATCC BAA-1280 / DSM 17508 / OCM 812 / Nankai-3).